An 855-amino-acid polypeptide reads, in one-letter code: Protein KRI1 homolog (855 aa).

6 disordered regions span residues V47–K67, K82–P117, E130–E196, S312–L342, Y424–D453, and K589–N855. Residues S48–V64 show a composition bias toward acidic residues. The span at K82–T91 shows a compositional bias: basic and acidic residues. 5 positions are modified to phosphoserine: S95, S97, S98, S137, and S138. Basic and acidic residues predominate over residues E160 to E176. The residue at position 179 (S179) is a Phosphoserine. Residues R307–A362 adopt a coiled-coil conformation. Positions C441–Y452 are enriched in acidic residues. The span at V609–E619 shows a compositional bias: low complexity. Residues K630–A640 are compositionally biased toward basic residues. Basic and acidic residues-rich tracts occupy residues V650–D664 and S674–Q692. 3 stretches are compositionally biased toward polar residues: residues V720–S748, S756–Q773, and A792–P805. Positions K812–N826 are enriched in low complexity. Positions R842–N855 are enriched in basic residues.

This sequence belongs to the KRI1 family.

The chain is Protein KRI1 homolog from Drosophila melanogaster (Fruit fly).